Reading from the N-terminus, the 398-residue chain is Acetate kinase 1 (398 aa).

N10 serves as a coordination point for Mg(2+). K17 is a binding site for ATP. R89 provides a ligand contact to substrate. The active-site Proton donor/acceptor is the D146. ATP contacts are provided by residues 206–210 (HLGNG), 281–283 (DCR), and 329–333 (GIGEN). Residue E384 participates in Mg(2+) binding.

The protein belongs to the acetokinase family. Homodimer. Requires Mg(2+) as cofactor. The cofactor is Mn(2+).

It localises to the cytoplasm. The enzyme catalyses acetate + ATP = acetyl phosphate + ADP. It participates in metabolic intermediate biosynthesis; acetyl-CoA biosynthesis; acetyl-CoA from acetate: step 1/2. Functionally, catalyzes the formation of acetyl phosphate from acetate and ATP. Can also catalyze the reverse reaction. The protein is Acetate kinase 1 of Neisseria meningitidis serogroup B (strain ATCC BAA-335 / MC58).